The following is a 322-amino-acid chain: NADH-cytochrome b5 reductase 2 (322 aa).

Residues 32–48 (LAPIYISVGLAGLGVGL) form a helical membrane-spanning segment. Positions 72–176 (QGWVDLKLSE…KGPIPKYPWE (105 aa)) constitute an FAD-binding FR-type domain. An FAD-binding site is contributed by 179–214 (KHKHICLIAGGTGITPMYQLARQIFKNPEDQTKVTL).

This sequence belongs to the flavoprotein pyridine nucleotide cytochrome reductase family. Requires FAD as cofactor.

Its subcellular location is the mitochondrion outer membrane. It carries out the reaction 2 Fe(III)-[cytochrome b5] + NADH = 2 Fe(II)-[cytochrome b5] + NAD(+) + H(+). May mediate the reduction of outer membrane cytochrome b5. The polypeptide is NADH-cytochrome b5 reductase 2 (mcr1) (Aspergillus clavatus (strain ATCC 1007 / CBS 513.65 / DSM 816 / NCTC 3887 / NRRL 1 / QM 1276 / 107)).